Reading from the N-terminus, the 385-residue chain is Odorant receptor 47a (385 aa).

Topologically, residues 1–33 are cytoplasmic; it reads MDSFLQVQKSTIALLGFDLFSENREMWKRPYRA. The helical transmembrane segment at 34–54 threads the bilayer; it reads MNVFSIAAIFPFILAAVLHNW. At 55–62 the chain is on the extracellular side; it reads KNVLLLAD. Residues 63–83 form a helical membrane-spanning segment; sequence AMVALLITILGLFKFSMILYL. The Cytoplasmic portion of the chain corresponds to 84 to 129; that stretch reads RRDFKRLIDKFRLLMSNEAEQGEEYAEILNAANKQDQRMCTLFRTC. The helical transmembrane segment at 130–150 threads the bilayer; that stretch reads FLLAWALNSVLPLVRMGLSYW. Residues 151-175 are Extracellular-facing; that stretch reads LAGHAEPELPFPCLFPWNIHIIRNY. The helical transmembrane segment at 176–196 threads the bilayer; that stretch reads VLSFIWSAFASTGVVLPAVSL. Topologically, residues 197–255 are cytoplasmic; sequence DTIFCSFTSNLCAFFKIAQYKVVRFKGGSLKESQATLNKVFALYQTSLDMCNDLNQCYQ. The helical transmembrane segment at 256-276 threads the bilayer; sequence PIICAQFFISSLQLCMLGYLF. At 277–284 the chain is on the extracellular side; sequence SITFAQTE. The helical transmembrane segment at 285 to 305 threads the bilayer; it reads GVYYASFIATIIIQAYIYCYC. Over 306–357 the chain is Cytoplasmic; sequence GENLKTESASFEWAIYDSPWHESLGAGGASTSICRSLLISMMRAHRGFRITG. The helical transmembrane segment at 358–378 threads the bilayer; the sequence is YFFEANMEAFSSIVRTAMSYI. The Extracellular portion of the chain corresponds to 379–385; that stretch reads TMLRSFS.

It belongs to the insect chemoreceptor superfamily. Heteromeric odorant receptor channel (TC 1.A.69) family. Or1a subfamily. As to quaternary structure, interacts with Orco. Complexes exist early in the endomembrane system in olfactory sensory neurons (OSNs), coupling these complexes to the conserved ciliary trafficking pathway. In terms of tissue distribution, expressed with Orco in 40 olfactory receptor neurons in a broad area across the antenna, including both anterior and posterior faces. This expression pattern matches the distribution of the small sensilla basiconica. Expression in the antenna is observed late in antennal development at 93 hours APF.

The protein localises to the cell membrane. In terms of biological role, odorant receptor which mediates acceptance or avoidance behavior, depending on its substrates. The odorant receptor repertoire encodes a large collection of odor stimuli that vary widely in identity, intensity, and duration. Complexes with Orco to form odorant-sensing units, providing sensitive and prolonged odorant signaling and calcium permeability. They are necessary and sufficient to promote functional reconstitution of odor-evoked signaling in sensory neurons that normally respond only to carbon dioxide. Involved in the behavioral responses to esters. Involved in the behavioral responses to pentyl acetate. The sequence is that of Odorant receptor 47a (Or47a) from Drosophila melanogaster (Fruit fly).